The chain runs to 105 residues: Endogenous retrovirus group K member 104 Rec protein (105 aa).

Residues 1 to 43 are disordered; that stretch reads MNPSEMQRKAPPRRRRHCNRAPLTHKMNKMVTSEEEMKLPSTK. Basic residues predominate over residues 10-19; the sequence is APPRRRRHCN. The Nuclear localization signal signature appears at 13 to 20; it reads RRRRHCNR. The Nuclear export signal motif lies at 50–59; sequence WAQLKKLTQL.

Forms homodimers, homotrimers, and homotetramers via a C-terminal domain. Associates with XPO1 and with ZNF145.

The protein localises to the cytoplasm. It is found in the nucleus. The protein resides in the nucleolus. Retroviral replication requires the nuclear export and translation of unspliced, singly-spliced and multiply-spliced derivatives of the initial genomic transcript. Rec interacts with a highly structured RNA element (RcRE) present in the viral 3'LTR and recruits the cellular nuclear export machinery. This permits export to the cytoplasm of unspliced genomic or incompletely spliced subgenomic viral transcripts. This Homo sapiens (Human) protein is Endogenous retrovirus group K member 104 Rec protein (HERV-K104).